A 748-amino-acid chain; its full sequence is Choline O-acetyltransferase (748 aa).

A compositionally biased stretch (basic residues) spans 1–10 (MGLRTAKKRG). Positions 1 to 89 (MGLRTAKKRG…EWCGAASAEA (89 aa)) are disordered. Residues 17–32 (WKREEGGGTRGRREVR) show a composition bias toward basic and acidic residues. Residues 40–53 (GGRGDPGDVGGPAG) show a composition bias toward gly residues. Composition is skewed to low complexity over residues 54-65 (NPGCSPHPRAAT) and 73-89 (HTPA…SAEA). Ser-125 carries the phosphoserine modification. His-442 acts as the Proton acceptor in catalysis. Residue Ser-473 is modified to Phosphoserine. CoA is bound by residues 520 to 532 (GKTF…CSPD), Ser-558, and Gln-659. A disordered region spans residues 727–748 (PTESKPLATKEKATRPSQGHQP).

It belongs to the carnitine/choline acetyltransferase family.

The enzyme catalyses choline + acetyl-CoA = acetylcholine + CoA. In terms of biological role, catalyzes the reversible synthesis of acetylcholine (ACh) from acetyl CoA and choline at cholinergic synapses. This chain is Choline O-acetyltransferase (CHAT), found in Homo sapiens (Human).